The sequence spans 206 residues: Platelet glycoprotein Ib beta chain (206 aa).

The signal sequence occupies residues 1 to 26 (MGSRPRGALSLLLLLLALLSRPASGC). Cystine bridges form between cysteine 26–cysteine 32 and cysteine 30–cysteine 39. The region spanning 27–55 (PAPCSCAGTLVDCGRRGLTWASLPAAFPP) is the LRRNT domain. Topologically, residues 27–147 (PAPCSCAGTL…RAACAPGLLC (121 aa)) are extracellular. Residues 60-83 (LVLTGNNLTALPPGLLDALPALRA) form an LRR repeat. An N-linked (GlcNAc...) asparagine glycan is attached at asparagine 66. An LRRCT domain is found at 89 to 143 (NPWRCDCRLLPLRAWLAGRPERAPYRDLRCVAPPALRGRLLPYVAEDELRAACAP). Cystine bridges form between cysteine 93-cysteine 118 and cysteine 95-cysteine 141. The helical transmembrane segment at 148–172 (WGALVAQLALLVLGLLHALLLALLL) threads the bilayer. The Cytoplasmic portion of the chain corresponds to 173-206 (GRLRRLRARARARSIQEFSLTAPLVAESARGGAS). 2 positions are modified to phosphoserine: serine 186 and serine 191. Threonine 193 is subject to Phosphothreonine. A Phosphoserine modification is found at serine 200.

Two GP-Ib beta are disulfide-linked to one GP-Ib alpha. GP-IX is complexed with the GP-Ib heterodimer via a non covalent linkage. Interacts with TRAF4.

It localises to the membrane. Gp-Ib, a surface membrane protein of platelets, participates in the formation of platelet plugs by binding to von Willebrand factor, which is already bound to the subendothelium. The sequence is that of Platelet glycoprotein Ib beta chain (Gp1bb) from Mus musculus (Mouse).